Consider the following 421-residue polypeptide: Solute carrier family 35 member F3 (421 aa).

The segment at 25–45 (EGEERPRDSPGPAEAQAPAGV) is disordered. 10 consecutive transmembrane segments (helical) span residues 66–86 (IFWGVAVVLCVCSSWAGSTQL), 98–118 (FTLTWFATNWNFLFFPLYYVG), 149–169 (VFFTKAAPFGVLWTLTNYLYL), 179–199 (DVSVLFCCNKAFVFLLSWIVL), 208–228 (IVAAILAIAGIVMMTYADGFH), 232–252 (VIGIALVVASASMSALYKVLF), 266–286 (LFLSILGVFNILFITCIPIIL), 305–325 (LCGFSVLLLTFNIVLNFGIAV), 326–346 (TYPTLMSLGIVLSIPVNAVID), and 352–372 (IVFNGVRVIAIIIIGLGFLLL). The tract at residues 393–421 (KKEEPAEGAADLSSGPQSKNRRARPSFAR) is disordered. Residues 411–421 (KNRRARPSFAR) are compositionally biased toward basic residues.

The protein belongs to the SLC35F solute transporter family. Expressed at the highest levels in the adult cerebellum.

It is found in the membrane. It catalyses the reaction thiamine(in) = thiamine(out). Its function is as follows. Mediates thiamine transport. The sequence is that of Solute carrier family 35 member F3 from Homo sapiens (Human).